A 106-amino-acid polypeptide reads, in one-letter code: CLAVATA3/ESR (CLE)-related protein 21 (106 aa).

A signal peptide spans 1-31 (MLILSSRYAMKRDVLIIVIFTVLVLIIISRS). Residue Asn-47 is glycosylated (N-linked (GlcNAc...) asparagine). Residues 72 to 82 (KVRRRSSRFRR) are compositionally biased toward basic residues. A disordered region spans residues 72 to 106 (KVRRRSSRFRRKTDGDEEEEEKRSIPTGPNPLHNK). 2 positions are modified to hydroxyproline: Pro-97 and Pro-100. A glycan (O-linked (Ara...) hydroxyproline) is linked at Pro-100.

It belongs to the CLV3/ESR signal peptide family. The O-glycosylation (arabinosylation) of the hydroxyproline Pro-100 enhances binding affinity of the CLE21p peptide for its receptor. Mostly expressed in leaves and apex, and, to a lower extent, in seedlings, flowers, stems and siliques.

Its subcellular location is the secreted. It is found in the extracellular space. Extracellular signal peptide that regulates cell fate. Represses root apical meristem maintenance. Regulates the transition of protophloem cells from proliferation to differentiation, thus impinging on postembryonic growth capacity of the root meristem; this signaling pathway requires CRN and CLV2. This chain is CLAVATA3/ESR (CLE)-related protein 21, found in Arabidopsis thaliana (Mouse-ear cress).